Here is a 1028-residue protein sequence, read N- to C-terminus: Beta-galactosidase (1028 aa).

Residues Asn-104 and Asp-203 each coordinate substrate. Na(+) is bound at residue Asp-203. Mg(2+) contacts are provided by Glu-418, His-420, and Glu-463. Substrate contacts are provided by residues Glu-463 and 539 to 542 (EYAH). Glu-463 serves as the catalytic Proton donor. Glu-539 functions as the Nucleophile in the catalytic mechanism. Asn-599 contacts Mg(2+). Na(+) is bound by residues Phe-603 and Asn-606. Residues Asn-606 and Trp-1003 each coordinate substrate.

This sequence belongs to the glycosyl hydrolase 2 family. In terms of assembly, homotetramer. It depends on Mg(2+) as a cofactor. The cofactor is Na(+).

It catalyses the reaction Hydrolysis of terminal non-reducing beta-D-galactose residues in beta-D-galactosides.. This chain is Beta-galactosidase, found in Enterobacter cloacae.